Reading from the N-terminus, the 174-residue chain is Phosphopantetheine adenylyltransferase (174 aa).

Threonine 10 contributes to the substrate binding site. ATP contacts are provided by residues threonine 10–phenylalanine 11 and histidine 18. Positions 44, 76, and 90 each coordinate substrate. Residues glycine 91–arginine 93, glutamate 101, and histidine 126–serine 132 each bind ATP.

The protein belongs to the bacterial CoaD family. In terms of assembly, homohexamer. Requires Mg(2+) as cofactor.

It is found in the cytoplasm. The catalysed reaction is (R)-4'-phosphopantetheine + ATP + H(+) = 3'-dephospho-CoA + diphosphate. It functions in the pathway cofactor biosynthesis; coenzyme A biosynthesis; CoA from (R)-pantothenate: step 4/5. Functionally, reversibly transfers an adenylyl group from ATP to 4'-phosphopantetheine, yielding dephospho-CoA (dPCoA) and pyrophosphate. In Alkalilimnicola ehrlichii (strain ATCC BAA-1101 / DSM 17681 / MLHE-1), this protein is Phosphopantetheine adenylyltransferase.